Here is a 197-residue protein sequence, read N- to C-terminus: MSTYIIINIALLIAIVALIFFLSKKTKSEASYVKSDITNKSYLVQNLPNKEEAAHILGIIDKRISILDDYLRENINKFTEYKPYIEQFNNRIKKLTLYENAPDGKYTSFTVDKGKEIALCLRSRKTGQIHDINLVMYVTLHELAHVACPETDHTELFKKIFIFLIKISIDLNIYKHIDYEADPAEYCGLVIDEDLLK.

The first 30 residues, 1 to 30 (MSTYIIINIALLIAIVALIFFLSKKTKSEA), serve as a signal peptide directing secretion.

This is an uncharacterized protein from Acanthamoeba polyphaga (Amoeba).